The primary structure comprises 434 residues: Sodium/bile acid cotransporter 5 (434 aa).

A signal peptide spans 1–18 (MSGNFFIFLLLLVTPGEA). Over 19 to 129 (KKSFLSFLNI…VRVFRQTDDS (111 aa)) the chain is Extracellular. N-linked (GlcNAc...) asparagine glycosylation is found at Asn73 and Asn96. The helical transmembrane segment at 130-150 (LLQAPIHVDSSIFLLVLSMIL) threads the bilayer. The Cytoplasmic segment spans residues 151–172 (LNKCAFGCKIEFQVLQTVWKRP). A helical membrane pass occupies residues 173-193 (LPILLGVVIQFFLMPFCGFLL). Over 194–203 (SQILGLPKAQ) the chain is Extracellular. A helical transmembrane segment spans residues 204 to 226 (AFGFVMTCTCPGGGGGYLFALLL). The Cytoplasmic segment spans residues 227–232 (EGDVTL). The chain crosses the membrane as a helical span at residues 233–255 (AILMTCTSTSLALIMMPVNSYFY). The Extracellular portion of the chain corresponds to 256–268 (SRLLGLAGAFHVP). Residues 269–289 (VLKIVSTLLFILMPMSTGVII) form a helical membrane-spanning segment. Residues 290–306 (KHKMPAKAICLERVVRP) are Cytoplasmic-facing. Residues 307–327 (LSLTLMFVGIYLAFRMGLVFL) form a helical membrane-spanning segment. Over 328–331 (RMAN) the chain is Extracellular. Residues 332–352 (LEVFLLGLLVPALGLLFGYSL) traverse the membrane as a helical segment. Residues 353–365 (AKVYLLPLPVCKT) lie on the Cytoplasmic side of the membrane. Residues 366–386 (VALETGMLNSFLALAIIQLSF) form a helical membrane-spanning segment. Residues 387-395 (SQPKAHEAS) lie on the Extracellular side of the membrane. A helical transmembrane segment spans residues 396 to 416 (VAPFTVAMCSSCEMLLLLLVY). The Cytoplasmic portion of the chain corresponds to 417-434 (KAKRRPSLSTEYEKTPLV).

The protein belongs to the bile acid:sodium symporter (BASS) (TC 2.A.28) family.

It is found in the membrane. This chain is Sodium/bile acid cotransporter 5 (Slc10a5), found in Mus musculus (Mouse).